Consider the following 748-residue polypeptide: Ribonucleoprotein PTB-binding 1 (748 aa).

The tract at residues 1–42 (MAADVSVTHRPPLSPEAEAEAETPETVDRRTPEQELPPLDPE) is disordered. Position 2 is an N-acetylalanine (A2). Phosphoserine is present on residues S6 and S14. T31 is modified (phosphothreonine). Positions 45-60 (RKRLEHTERQFRNRRK) match the Nuclear localization signal motif. RRM domains are found at residues 59–130 (RKIL…LQPT), 132–210 (ALLC…WTDA), and 221–299 (RCLC…FCAP). The interval 307-401 (LAALIAAQAT…QSQSQKKPGI (95 aa)) is interaction with PTBP1. Disordered regions lie at residues 390 to 505 (QSQS…GEPP), 525 to 647 (SNLA…PLSH), and 672 to 731 (KAVG…QHSQ). Position 469 is a phosphothreonine (T469). S480, S576, S626, and S630 each carry phosphoserine. Residues 675–685 (GSSPMGSSEGL) show a composition bias toward low complexity. A phosphoserine mark is found at S716 and S720. The Nuclear localization signal signature appears at 743-746 (KRKR).

In terms of assembly, interacts with PTBP1, RAVER2, VCL and ACTN1. Part of a complex containing RAVER1, VCL and ACTN1. In terms of tissue distribution, ubiquitous. Detected in aorta, brain, gut, heart, kidney, liver, spleen, uterus and skeletal muscle.

The protein localises to the nucleus. Its subcellular location is the cytoplasm. Cooperates with PTBP1 to modulate regulated alternative splicing events. Promotes exon skipping. Cooperates with PTBP1 to modulate switching between mutually exclusive exons during maturation of the TPM1 pre-mRNA. This chain is Ribonucleoprotein PTB-binding 1 (Raver1), found in Rattus norvegicus (Rat).